A 973-amino-acid polypeptide reads, in one-letter code: Probable outer membrane protein pmp13 (973 aa).

The N-terminal stretch at 1 to 24 (MKTSIRKFLISTTLAPCFASTAFT) is a signal peptide. Polar residues predominate over residues 284 to 293 (QNNTASPQNS). Residues 284 to 303 (QNNTASPQNSLPAPTPPPTP) are disordered. The Autotransporter domain occupies 691 to 973 (EDVPGKQLSI…TLDIGSKLRF (283 aa)).

This sequence belongs to the PMP outer membrane protein family.

The protein resides in the secreted. Its subcellular location is the cell wall. It is found in the cell outer membrane. This Chlamydia pneumoniae (Chlamydophila pneumoniae) protein is Probable outer membrane protein pmp13 (pmp13).